A 508-amino-acid polypeptide reads, in one-letter code: DNA-directed RNA polymerase subunit alpha (508 aa).

The interval M1–H380 is alpha N-terminal domain (alpha-NTD). The alpha C-terminal domain (alpha-CTD) stretch occupies residues N434–S508.

This sequence belongs to the RNA polymerase alpha chain family. As to quaternary structure, in plastids the minimal PEP RNA polymerase catalytic core is composed of four subunits: alpha, beta, beta', and beta''. When a (nuclear-encoded) sigma factor is associated with the core the holoenzyme is formed, which can initiate transcription.

It localises to the plastid. The protein localises to the chloroplast. It carries out the reaction RNA(n) + a ribonucleoside 5'-triphosphate = RNA(n+1) + diphosphate. Functionally, DNA-dependent RNA polymerase catalyzes the transcription of DNA into RNA using the four ribonucleoside triphosphates as substrates. The polypeptide is DNA-directed RNA polymerase subunit alpha (rpoA) (Oltmannsiellopsis viridis (Marine flagellate)).